We begin with the raw amino-acid sequence, 245 residues long: Proteolipid protein DM alpha (245 aa).

4 consecutive transmembrane segments (helical) span residues 19–35 (LIAT…FCGC), 71–87 (IIYG…VLLL), 117–133 (FIFL…GVFA), and 204–220 (LFIA…IALL).

This sequence belongs to the myelin proteolipid protein family. In terms of tissue distribution, highly expressed in white matter in myelinating shark brain.

It localises to the membrane. This is Proteolipid protein DM alpha from Squalus acanthias (Spiny dogfish).